The sequence spans 360 residues: Decorin (360 aa).

The signal sequence occupies residues methionine 1–alanine 16. Residues glycine 17 to glutamate 30 constitute a propeptide that is removed on maturation. Residue serine 34 is glycosylated (O-linked (Xyl...) (glycosaminoglycan) serine). 2 cysteine pairs are disulfide-bonded: cysteine 55/cysteine 61 and cysteine 59/cysteine 68. 12 LRR repeats span residues aspartate 74–isoleucine 94, threonine 95–isoleucine 118, serine 119–leucine 142, lysine 143–isoleucine 163, threonine 164–leucine 187, lysine 188–isoleucine 213, threonine 214–isoleucine 234, threonine 235–isoleucine 258, serine 259–leucine 282, isoleucine 283–isoleucine 305, serine 306–valine 335, and glutamine 336–lysine 360. Asparagine 212 is a glycosylation site (N-linked (GlcNAc...) asparagine). Asparagine 263 and asparagine 304 each carry an N-linked (GlcNAc...) asparagine glycan. A disulfide bond links cysteine 314 and cysteine 347.

The protein belongs to the small leucine-rich proteoglycan (SLRP) family. SLRP class I subfamily. As to quaternary structure, binds to type I and type II collagen, fibronectin and TGF-beta. Forms a ternary complex with MFAP2 and ELN. Interacts with DPT. Post-translationally, the attached glycosaminoglycan chain can be either chondroitin sulfate or dermatan sulfate depending upon the tissue of origin.

The protein resides in the secreted. It is found in the extracellular space. It localises to the extracellular matrix. Functionally, may affect the rate of fibrils formation. The protein is Decorin (DCN) of Canis lupus familiaris (Dog).